A 335-amino-acid chain; its full sequence is Putative serine/threonine-protein kinase 040L (335 aa).

The Protein kinase domain occupies 33–329; the sequence is YYYQEFHDEG…DRLTELHHHL (297 aa). ATP-binding positions include 39-47 and K62; that span reads HDEGGYGSI. D196 acts as the Proton acceptor in catalysis.

This sequence belongs to the protein kinase superfamily. Ser/Thr protein kinase family.

In Invertebrate iridescent virus 3 (IIV-3), this protein is Putative serine/threonine-protein kinase 040L.